The following is an 883-amino-acid chain: Protein argonaute 16 (883 aa).

Residues 254-366 form the PAZ domain; it reads PVFDFLLTNQ…VPIELCHMVS (113 aa). The 310-residue stretch at 535–844 folds into the Piwi domain; the sequence is FLLCVLPERK…AAAQMGQFMK (310 aa).

Belongs to the argonaute family. Ago subfamily.

In terms of biological role, probably involved in the RNA silencing pathway. May bind to short RNAs such as microRNAs (miRNAs) or short interfering RNAs (siRNAs), and represses the translation of mRNAs which are complementary to them. This is Protein argonaute 16 (AGO16) from Oryza sativa subsp. japonica (Rice).